Here is a 573-residue protein sequence, read N- to C-terminus: AP-4 complex accessory subunit Tepsin (573 aa).

Residues 8–141 form the ENTH domain; it reads RDRLSFLHRL…FSDAVPQPPS (134 aa). Disordered stretches follow at residues 136 to 155 and 194 to 311; these read VPQP…MGAQ and NAVR…NDCQ. The segment covering 137–150 has biased composition (pro residues); it reads PQPPSQPPQIPPPA. The span at 217 to 229 shows a compositional bias: polar residues; it reads PAVTPSASHTHPN. Residues 260–293 show a composition bias toward low complexity; the sequence is SSPSSQNSSCTSNLSRASDSGSRSGSDSHSGTSR. A compositionally biased stretch (basic and acidic residues) spans 294–303; it reads EPGDLAERAE. Ser400 is subject to Phosphoserine. The interval 497–526 is disordered; it reads CSSEQGTESEQRLENTDTPEDSSSPLPWSP. Residues 526-536 are interaction with AP4B1; sequence PNSLFAGMELV. The tract at residues 563-573 is interaction with AP4E1; that stretch reads SEPSAFAFLNM.

As to quaternary structure, interacts with AP4B1 and AP4E1; the interaction is direct and mediates the association of TEPSIN with the adapter-like complex 4 (AP-4), a heterotetramer composed of AP4B1, AP4E1, AP4M1 and AP4S1.

It localises to the golgi apparatus. It is found in the trans-Golgi network membrane. Its subcellular location is the cytoplasmic vesicle. The protein localises to the cytoplasm. The protein resides in the cytosol. Functionally, associates with the adapter-like complex 4 (AP-4) and may therefore play a role in vesicular trafficking of proteins at the trans-Golgi network. The polypeptide is AP-4 complex accessory subunit Tepsin (Mus musculus (Mouse)).